Consider the following 165-residue polypeptide: Ribosome maturation factor RimM (165 aa).

A PRC barrel domain is found at 89–161; the sequence is EADTHYVVDL…KIVIKPVRQW (73 aa).

This sequence belongs to the RimM family. As to quaternary structure, binds ribosomal protein uS19.

It is found in the cytoplasm. In terms of biological role, an accessory protein needed during the final step in the assembly of 30S ribosomal subunit, possibly for assembly of the head region. Essential for efficient processing of 16S rRNA. May be needed both before and after RbfA during the maturation of 16S rRNA. It has affinity for free ribosomal 30S subunits but not for 70S ribosomes. The chain is Ribosome maturation factor RimM from Clostridium botulinum (strain Eklund 17B / Type B).